The primary structure comprises 115 residues: Non-specific lipid-transfer protein 3 (115 aa).

Residues 1–23 form the signal peptide; the sequence is MAFALRFFTCLVLTVCIVASVDA. 4 cysteine pairs are disulfide-bonded: C27–C74, C37–C51, C52–C97, and C72–C111.

This sequence belongs to the plant LTP family.

Plant non-specific lipid-transfer proteins transfer phospholipids as well as galactolipids across membranes. May play a role in wax or cutin deposition in the cell walls of expanding epidermal cells and certain secretory tissues. This Arabidopsis thaliana (Mouse-ear cress) protein is Non-specific lipid-transfer protein 3 (LTP3).